The sequence spans 494 residues: 3-octaprenyl-4-hydroxybenzoate carboxy-lyase (494 aa).

N172 is a Mn(2+) binding site. Prenylated FMN-binding positions include 175-177 (IYR), 189-191 (RWL), and 194-195 (RG). E238 lines the Mn(2+) pocket. D287 acts as the Proton donor in catalysis.

The protein belongs to the UbiD family. As to quaternary structure, homohexamer. Prenylated FMN is required as a cofactor. Mn(2+) serves as cofactor.

The protein resides in the cell membrane. It carries out the reaction a 4-hydroxy-3-(all-trans-polyprenyl)benzoate + H(+) = a 2-(all-trans-polyprenyl)phenol + CO2. The protein operates within cofactor biosynthesis; ubiquinone biosynthesis. In terms of biological role, catalyzes the decarboxylation of 3-octaprenyl-4-hydroxy benzoate to 2-octaprenylphenol, an intermediate step in ubiquinone biosynthesis. This chain is 3-octaprenyl-4-hydroxybenzoate carboxy-lyase, found in Shigella flexneri serotype 5b (strain 8401).